The chain runs to 249 residues: Transmembrane protein 51 (249 aa).

Helical transmembrane passes span 17-37 (IGLGMLVLGVIMAMWNLVPGF) and 64-84 (VAYVLVGAGMMLLLLAICLSI). Disordered regions lie at residues 95–126 (ELARIQQQAGTVPHSQEEDSQEEEEDVSSRYY), 161–199 (TGLDEATPTSTRAETETSPGHAPDRQNSKLAKRLKPLKV), and 213–249 (RITLPDKNVPPPSIEPLTPPPLYDEVQAKAPDARPPD). The segment covering 99-108 (IQQQAGTVPH) has biased composition (polar residues). Phosphoserine occurs at positions 109, 114, 178, and 188. The span at 167–178 (TPTSTRAETETS) shows a compositional bias: polar residues. Over residues 190–199 (LAKRLKPLKV) the composition is skewed to basic residues. Residues 220–234 (NVPPPSIEPLTPPPL) are compositionally biased toward pro residues.

The protein resides in the membrane. This is Transmembrane protein 51 (Tmem51) from Mus musculus (Mouse).